The primary structure comprises 556 residues: Membrane protein insertase YidC (556 aa).

Transmembrane regions (helical) follow at residues 6 to 26, 332 to 352, 358 to 378, 428 to 448, and 501 to 521; these read IVLY…WQID, LDLT…FSLM, VVGN…LAFY, LGGC…YWVL, and VMMF…SGLV.

It belongs to the OXA1/ALB3/YidC family. Type 1 subfamily. In terms of assembly, interacts with the Sec translocase complex via SecD. Specifically interacts with transmembrane segments of nascent integral membrane proteins during membrane integration.

It is found in the cell inner membrane. In terms of biological role, required for the insertion and/or proper folding and/or complex formation of integral membrane proteins into the membrane. Involved in integration of membrane proteins that insert both dependently and independently of the Sec translocase complex, as well as at least some lipoproteins. Aids folding of multispanning membrane proteins. This Legionella pneumophila (strain Corby) protein is Membrane protein insertase YidC.